Here is a 749-residue protein sequence, read N- to C-terminus: ATP-dependent zinc metalloprotease FtsH 3 (749 aa).

The span at Met1–Ala17 shows a compositional bias: basic and acidic residues. The interval Met1–Phe67 is disordered. The Cytoplasmic portion of the chain corresponds to Met1–Gly75. Residues Ile76–Ala96 form a helical membrane-spanning segment. The Extracellular portion of the chain corresponds to Pro97 to Ser186. A helical transmembrane segment spans residues Leu187–Phe207. Residues Leu208 to Ala749 lie on the Cytoplasmic side of the membrane. Gly281–Thr288 provides a ligand contact to ATP. His504 serves as a coordination point for Zn(2+). Residue Glu505 is part of the active site. The Zn(2+) site is built by His508 and Asp580. Residues Gly679 to Glu689 show a composition bias toward basic and acidic residues. The disordered stretch occupies residues Gly679–Ala749.

In the central section; belongs to the AAA ATPase family. This sequence in the C-terminal section; belongs to the peptidase M41 family. Homohexamer. Zn(2+) is required as a cofactor.

It is found in the cell membrane. Acts as a processive, ATP-dependent zinc metallopeptidase for both cytoplasmic and membrane proteins. Plays a role in the quality control of integral membrane proteins. This chain is ATP-dependent zinc metalloprotease FtsH 3, found in Conexibacter woesei (strain DSM 14684 / CCUG 47730 / CIP 108061 / JCM 11494 / NBRC 100937 / ID131577).